The following is a 608-amino-acid chain: UvrABC system protein C (608 aa).

Residues 22 to 100 form the GIY-YIG domain; it reads EKPGIYQYLN…IKKYKPRYNV (79 aa). A UVR domain is found at 214–249; that stretch reads QEISRLLYQRMQDLAAEMKFEEAQKVKEKYALIENY.

The protein belongs to the UvrC family. Interacts with UvrB in an incision complex.

The protein resides in the cytoplasm. Its function is as follows. The UvrABC repair system catalyzes the recognition and processing of DNA lesions. UvrC both incises the 5' and 3' sides of the lesion. The N-terminal half is responsible for the 3' incision and the C-terminal half is responsible for the 5' incision. This is UvrABC system protein C from Bacteroides fragilis (strain ATCC 25285 / DSM 2151 / CCUG 4856 / JCM 11019 / LMG 10263 / NCTC 9343 / Onslow / VPI 2553 / EN-2).